The primary structure comprises 411 residues: Protein translocase subunit SecY (411 aa).

The next 10 membrane-spanning stretches (helical) occupy residues 13–33 (FTLLLLVLARLGIFIPVPGID), 52–72 (IFSGGGFSTIGIFALGIVPYI), 111–131 (ALGWATLQSGAISIWVKPYVF), 135–155 (FTFVCESVLALTAGSMIIMWL), 163–180 (GIGNGASLLIFQNIVSGL), 197–217 (SIKFGLFIVIFLLMIIITIFV), 252–272 (GVMPIVFASASMALPAYLTQL), 291–311 (LYLVLYSVLILFFSYFYTSIV), 350–370 (FLGATFLFTVALIPFIIEKVA), and 377–397 (GLGATSLLILVGVAIDTAKQI).

It belongs to the SecY/SEC61-alpha family. As to quaternary structure, component of the plastid Sec protein translocase complex, which is composed of at least SecY, SecE and SecG.

Its subcellular location is the plastid. It localises to the chloroplast thylakoid membrane. In terms of biological role, the central subunit of the protein translocation channel SecYE. Consists of two halves formed by TMs 1-5 and 6-10. These two domains form a lateral gate at the front which open onto the bilayer between TMs 2 and 7, and are clamped together by SecE at the back. The channel is closed by both a pore ring composed of hydrophobic SecY resides and a short helix (helix 2A) on the extracellular side of the membrane which forms a plug. In Porphyra purpurea (Red seaweed), this protein is Protein translocase subunit SecY.